The following is a 301-amino-acid chain: D-alanine--D-alanine ligase A (301 aa).

One can recognise an ATP-grasp domain in the interval 99-293 (KRILAFGNVR…FEELLDTIIE (195 aa)). ATP is bound at residue 126–181 (IENLGYPVFVKPNNGGSSVATTLVESKEAVKDAVLEALKYDTEVMIEEYIKGDEIT). Residues Asp248, Glu260, and Asn262 each coordinate Mg(2+).

Belongs to the D-alanine--D-alanine ligase family. Requires Mg(2+) as cofactor. It depends on Mn(2+) as a cofactor.

The protein localises to the cytoplasm. It catalyses the reaction 2 D-alanine + ATP = D-alanyl-D-alanine + ADP + phosphate + H(+). The protein operates within cell wall biogenesis; peptidoglycan biosynthesis. Cell wall formation. The protein is D-alanine--D-alanine ligase A of Clostridium perfringens (strain 13 / Type A).